A 655-amino-acid chain; its full sequence is p-hydroxybenzoic acid efflux pump subunit AaeB (655 aa).

Residues 1-12 are Periplasmic-facing; sequence MDIFSIANQHIR. A helical membrane pass occupies residues 13–33; it reads FAVKLATAIVLALFVGFHFQL. At 34–37 the chain is on the cytoplasmic side; it reads ETPR. A helical membrane pass occupies residues 38–58; sequence WAVLTAAIVAAGPAFAAGGEP. At 59–68 the chain is on the periplasmic side; sequence YSGAIRYRGF. A helical membrane pass occupies residues 69–89; that stretch reads LRIIGTFIGCIAGLVIIIAMI. Over 90-92 the chain is Cytoplasmic; it reads RAP. Residues 93-113 form a helical membrane-spanning segment; that stretch reads LLMILVCCIWAGFCTWISSLV. The Periplasmic portion of the chain corresponds to 114-120; that stretch reads RIENSYA. A helical membrane pass occupies residues 121-141; the sequence is WGLAGYTALIIVITIQPEPLL. The Cytoplasmic portion of the chain corresponds to 142–151; sequence TPQFAVERCS. Residues 152–172 traverse the membrane as a helical segment; the sequence is EIVIGIVCAIMADLLFSPRSI. Residues 173-369 lie on the Periplasmic side of the membrane; it reads KQEVDRELES…RTTLSCILGT (197 aa). A helical membrane pass occupies residues 370-390; it reads LFWLWTGWTSGSGAMVMIAVV. Residues 391–406 are Cytoplasmic-facing; sequence TSLAMRLPNPRMVAID. The helical transmembrane segment at 407 to 427 threads the bilayer; the sequence is FIYGTLAALPLGLLYFLVIIP. Residues 428–430 lie on the Periplasmic side of the membrane; that stretch reads NTQ. A helical membrane pass occupies residues 431-451; the sequence is QSMLLLCISLAVLGFFLGIEV. Residues 452-458 lie on the Cytoplasmic side of the membrane; the sequence is QKRRLGS. A helical membrane pass occupies residues 459 to 479; sequence MGALASTINIIVLDNPMTFHF. Topologically, residues 480 to 481 are periplasmic; sequence SQ. A helical transmembrane segment spans residues 482–502; that stretch reads FLDSALGQIVGCVLAFTVILL. Residues 503 to 655 are Cytoplasmic-facing; the sequence is VRDKSRDRTG…HKYQHALTDS (153 aa).

Belongs to the aromatic acid exporter ArAE (TC 2.A.85) family.

Its subcellular location is the cell inner membrane. Its function is as follows. Forms an efflux pump with AaeA. Could function as a metabolic relief valve, allowing to eliminate certain compounds when they accumulate to high levels in the cell. The protein is p-hydroxybenzoic acid efflux pump subunit AaeB of Escherichia coli O157:H7.